Reading from the N-terminus, the 301-residue chain is Amylovoran biosynthesis glycosyltransferase AmsB (301 aa).

The protein belongs to the glycosyltransferase 2 family.

It functions in the pathway glycan metabolism; exopolysaccharide biosynthesis. Its function is as follows. Involved in the biosynthesis of amylovoran, which functions as a virulence factor. May function as a glycosyl transferase which transfers galactose from UDP-galactose to a lipid-linked amylovoran-subunit precursor. The sequence is that of Amylovoran biosynthesis glycosyltransferase AmsB (amsB) from Erwinia amylovora (Fire blight bacteria).